The following is a 1073-amino-acid chain: Collagen alpha-2(I) chain (1073 aa).

The tract at residues 1 to 939 (APDPGPGPMG…PGPAGGGYDV (939 aa)) is disordered. Low complexity-rich tracts occupy residues 100 to 148 (EPGA…AAGP), 178 to 187 (EPGPNGAVGP), and 194 to 215 (PGNN…AGAP). Residues 217–227 (FPGPRGGPGPQ) are compositionally biased toward pro residues. Over residues 229–239 (PQGAAGQRGLA) the composition is skewed to low complexity. Positions 246 to 255 (GVKGDGGPKG) are enriched in gly residues. Low complexity-rich tracts occupy residues 296–315 (MPGA…PGDA), 321–348 (SGPA…AGPA), 386–399 (APGP…TGAT), and 411–423 (QGAA…QGLP). The span at 424–433 (GPAGGAGEAG) shows a compositional bias: gly residues. Residues 458-468 (NPGAAGASGPQ) show a composition bias toward low complexity. Gly residues predominate over residues 481–508 (GTDGGKGEPGAAGAAGGPGHQGPGGMPG). Over residues 519–530 (KGEKGEAGHRGP) the composition is skewed to basic and acidic residues. Composition is skewed to low complexity over residues 561-575 (SGSF…ARGA) and 584-597 (PAGA…PGAD). Residues 607-616 (GPSGGKGESG) are compositionally biased toward gly residues. 3 stretches are compositionally biased toward low complexity: residues 617 to 642 (PAGP…TGAR), 653 to 680 (FPGA…PAGK), and 708 to 729 (SGEK…SGPL). Positions 745–757 (GSPGGAGGVGEPG) are enriched in gly residues. Residues 758–774 (RVGPAGPAGARGNLGLP) are compositionally biased toward low complexity. The span at 811-820 (GESGPGGAAG) shows a compositional bias: gly residues. Low complexity predominate over residues 821 to 836 (AVGPAGARGAAGPSGP). Basic and acidic residues predominate over residues 837 to 851 (RGEKGVAGEKGERGL). 2 stretches are compositionally biased toward low complexity: residues 857 to 876 (LQGM…AGPN) and 906 to 917 (PGARGPPGYVGP). Residues 918-932 (AGPPGSPGLPGPPGP) are compositionally biased toward pro residues. The Fibrillar collagen NC1 domain maps to 1039–1073 (RTNKPSRLPLLDLAPLDLGGADQEFGLDLGPVCFK).

The protein belongs to the fibrillar collagen family.

Its subcellular location is the secreted. It is found in the extracellular space. The protein resides in the extracellular matrix. In Epinephelus aeneus (White grouper), this protein is Collagen alpha-2(I) chain.